The primary structure comprises 470 residues: Putative F-box/LRR-repeat protein At3g58920 (470 aa).

The region spanning 1–53 is the F-box domain; sequence MDRISNLPNEIICHIVSFLSAKEAAFASVLSKRWQNLFTIVQKLEFDDSVKNQ. 6 LRR repeats span residues 114–142, 143–170, 173–198, 225–250, 287–312, and 342–367; these read KLEIYGEDGYLLPSEVFTCKTIVDLKLTS, CIFAESYVIDVIPENAFLPGLESLFLKS, FSDLRGCAFQTLLSACPVLKTLTIYD, FTYFNGSDFKSITFDTPSLTYLKYID, EDDPITSNPTNLIKGLRNVEILHLST, and YECFNWRLLPILLKKTPNLKTLMIKG.

In Arabidopsis thaliana (Mouse-ear cress), this protein is Putative F-box/LRR-repeat protein At3g58920.